The following is a 430-amino-acid chain: Argininosuccinate lyase (430 aa).

It belongs to the lyase 1 family. Argininosuccinate lyase subfamily.

The protein resides in the cytoplasm. The catalysed reaction is 2-(N(omega)-L-arginino)succinate = fumarate + L-arginine. It participates in amino-acid biosynthesis; L-arginine biosynthesis; L-arginine from L-ornithine and carbamoyl phosphate: step 3/3. This chain is Argininosuccinate lyase, found in Sorangium cellulosum (strain So ce56) (Polyangium cellulosum (strain So ce56)).